We begin with the raw amino-acid sequence, 282 residues long: DNA-directed RNA polymerase III subunit RPC5 (282 aa).

The interval 1 to 70 (MSIDNKLFVT…TGEEEEDDPV (70 aa)) is disordered. Acidic residues-rich tracts occupy residues 10-35 (TEEDEEDRTQDRADVEDESNDIDMIA) and 60-70 (DTGEEEEDDPV). Thr-61 is subject to Phosphothreonine.

As to quaternary structure, component of the RNA polymerase III (Pol III) complex consisting of 17 subunits. Interacts with RPC53/RPC4. RPC53/RPC4, RPC37/RPC5 and RPC11/RPC10 probably form a Pol III subcomplex.

Its subcellular location is the nucleus. Its function is as follows. DNA-dependent RNA polymerase catalyzes the transcription of DNA into RNA using the four ribonucleoside triphosphates as substrates. Specific peripheric component of RNA polymerase III which synthesizes small RNAs, such as 5S rRNA and tRNAs. The RPC53/RPC4-RPC37/RPC5 subcomplex is required for terminator recognition and reinitiation. The polypeptide is DNA-directed RNA polymerase III subunit RPC5 (RPC37) (Saccharomyces cerevisiae (strain ATCC 204508 / S288c) (Baker's yeast)).